A 112-amino-acid chain; its full sequence is Protein lin-52 homolog (112 aa).

Belongs to the lin-52 family. As to quaternary structure, component of the DREAM complex.

This is Protein lin-52 homolog (lin52) from Tetraodon nigroviridis (Spotted green pufferfish).